The sequence spans 466 residues: tRNA-2-methylthio-N(6)-dimethylallyladenosine synthase (466 aa).

The MTTase N-terminal domain maps to 2-118 (KRFYIHTIGC…LPGHIQAVAH (117 aa)). [4Fe-4S] cluster is bound by residues cysteine 11, cysteine 47, cysteine 81, cysteine 157, cysteine 161, and cysteine 164. Residues 143-372 (DSSGVTGFIT…LELQNRITAE (230 aa)) form the Radical SAM core domain. Positions 375-453 (RALEGRVEQV…AHSLSGIAVG (79 aa)) constitute a TRAM domain.

This sequence belongs to the methylthiotransferase family. MiaB subfamily. Monomer. The cofactor is [4Fe-4S] cluster.

The protein localises to the cytoplasm. It carries out the reaction N(6)-dimethylallyladenosine(37) in tRNA + (sulfur carrier)-SH + AH2 + 2 S-adenosyl-L-methionine = 2-methylsulfanyl-N(6)-dimethylallyladenosine(37) in tRNA + (sulfur carrier)-H + 5'-deoxyadenosine + L-methionine + A + S-adenosyl-L-homocysteine + 2 H(+). Functionally, catalyzes the methylthiolation of N6-(dimethylallyl)adenosine (i(6)A), leading to the formation of 2-methylthio-N6-(dimethylallyl)adenosine (ms(2)i(6)A) at position 37 in tRNAs that read codons beginning with uridine. In Desulfosudis oleivorans (strain DSM 6200 / JCM 39069 / Hxd3) (Desulfococcus oleovorans), this protein is tRNA-2-methylthio-N(6)-dimethylallyladenosine synthase.